A 346-amino-acid polypeptide reads, in one-letter code: S-adenosylmethionine:tRNA ribosyltransferase-isomerase (346 aa).

It belongs to the QueA family. As to quaternary structure, monomer.

It localises to the cytoplasm. The catalysed reaction is 7-aminomethyl-7-carbaguanosine(34) in tRNA + S-adenosyl-L-methionine = epoxyqueuosine(34) in tRNA + adenine + L-methionine + 2 H(+). The protein operates within tRNA modification; tRNA-queuosine biosynthesis. In terms of biological role, transfers and isomerizes the ribose moiety from AdoMet to the 7-aminomethyl group of 7-deazaguanine (preQ1-tRNA) to give epoxyqueuosine (oQ-tRNA). This Neisseria gonorrhoeae (strain ATCC 700825 / FA 1090) protein is S-adenosylmethionine:tRNA ribosyltransferase-isomerase.